The primary structure comprises 192 residues: Acetolactate synthase small subunit (192 aa).

In terms of domain architecture, ACT spans 29 to 103 (IITVKVRNEM…DTLKVSDLTD (75 aa)).

This sequence belongs to the acetolactate synthase small subunit family. As to quaternary structure, dimer of large and small chains.

It catalyses the reaction 2 pyruvate + H(+) = (2S)-2-acetolactate + CO2. It participates in amino-acid biosynthesis; L-isoleucine biosynthesis; L-isoleucine from 2-oxobutanoate: step 1/4. Its pathway is amino-acid biosynthesis; L-valine biosynthesis; L-valine from pyruvate: step 1/4. The protein is Acetolactate synthase small subunit (ilvH) of Aquifex aeolicus (strain VF5).